Here is a 381-residue protein sequence, read N- to C-terminus: 2-epi-5-epi-valiolone synthase (381 aa).

NAD(+) contacts are provided by residues Asp-50, 81–84, 114–118, 138–139, Lys-151, Lys-160, and 178–181; these read EEAK, GIVLD, TS, and FLDT. Lys-151 is an active-site residue. A divalent metal cation-binding residues include Glu-193, His-264, and His-280.

The protein belongs to the sugar phosphate cyclases superfamily. EEVS family. It depends on NAD(+) as a cofactor. Requires Co(2+) as cofactor.

The enzyme catalyses D-sedoheptulose 7-phosphate = 2-epi-5-epi-valiolone + phosphate. Its pathway is antibiotic biosynthesis. Catalyzes the cyclization of D-sedoheptulose 7-phosphate to 2-epi-5-epi-valiolone. Involved in cetoniacytone A biosynthesis. This Actinomyces sp protein is 2-epi-5-epi-valiolone synthase.